Consider the following 93-residue polypeptide: Parbolysin P4 (93 aa).

Cystine bridges form between C16/C37, C22/C33, and C47/C60.

This sequence belongs to the worm cytolysin family. In terms of tissue distribution, localized within the skin and proboscis and are most readily isolated from body mucus secretions.

It is found in the secreted. Cytolysin that shows hemolytic activity (on bovine erythrocytes, HC(50)=5.75 mg/ml). This hemolytic activity is completely inhibited by small unilamelar vesicles composed of PC/PG, PC/PI and PC/PS in 1:1 molar ratios (with at least 100 mg/ml concentration). This is Parbolysin P4 from Parborlasia corrugatus (Antarctic nemertean worm).